The sequence spans 423 residues: Cytochrome b mRNA maturase bI2 (423 aa).

Topologically, residues 1-31 (MAFRKSNVYLSLVNSYIIDSPQPSSINYWWN) are mitochondrial matrix. Residues 1 to 143 (MAFRKSNVYL…CVYGQMSHWG (143 aa)) are cytochrome b. A helical membrane pass occupies residues 32–52 (MGSLLGLCLVIQIVTGIFMAM). The Mitochondrial intermembrane portion of the chain corresponds to 53 to 84 (HYSSNIELAFSSVEHIMRDVHNGYILRYLHAN). The chain crosses the membrane as a helical span at residues 85-105 (GASFFFMVMFMHMAKGLYYGS). At 106 to 115 (YRSPRVTLWN) the chain is on the mitochondrial matrix side. Residues 116 to 136 (VGVIIFILTIATAFLGYCCVY) form a helical membrane-spanning segment. Topologically, residues 137 to 153 (GQMSHWGNMNIASNMFN) are mitochondrial intermembrane. Residues 144-423 (NMNIASNMFN…SMKYKLGNYL (280 aa)) are maturase. Residues 154 to 174 (MMKTIYMMMLMLLIYIFYTIM) form a helical membrane-spanning segment. Residues 175–423 (MRQMMKTKEY…SMKYKLGNYL (249 aa)) lie on the Mitochondrial matrix side of the membrane.

In the N-terminal section; belongs to the cytochrome b family. The protein in the C-terminal section; belongs to the LAGLIDADG endonuclease family.

It localises to the mitochondrion inner membrane. Its function is as follows. This protein is responsible for splicing and maturation of cytochrome b mRNA. Specifically, it may be responsible for the splicing specificity of the second intron. The chain is Cytochrome b mRNA maturase bI2 (BI2) from Saccharomyces cerevisiae (strain ATCC 204508 / S288c) (Baker's yeast).